A 79-amino-acid polypeptide reads, in one-letter code: Phosphoribosylformylglycinamidine synthase subunit PurS (79 aa).

The protein belongs to the PurS family. As to quaternary structure, homodimer. Part of the FGAM synthase complex composed of 1 PurL, 1 PurQ and 2 PurS subunits.

The protein resides in the cytoplasm. The catalysed reaction is N(2)-formyl-N(1)-(5-phospho-beta-D-ribosyl)glycinamide + L-glutamine + ATP + H2O = 2-formamido-N(1)-(5-O-phospho-beta-D-ribosyl)acetamidine + L-glutamate + ADP + phosphate + H(+). The protein operates within purine metabolism; IMP biosynthesis via de novo pathway; 5-amino-1-(5-phospho-D-ribosyl)imidazole from N(2)-formyl-N(1)-(5-phospho-D-ribosyl)glycinamide: step 1/2. Its function is as follows. Part of the phosphoribosylformylglycinamidine synthase complex involved in the purines biosynthetic pathway. Catalyzes the ATP-dependent conversion of formylglycinamide ribonucleotide (FGAR) and glutamine to yield formylglycinamidine ribonucleotide (FGAM) and glutamate. The FGAM synthase complex is composed of three subunits. PurQ produces an ammonia molecule by converting glutamine to glutamate. PurL transfers the ammonia molecule to FGAR to form FGAM in an ATP-dependent manner. PurS interacts with PurQ and PurL and is thought to assist in the transfer of the ammonia molecule from PurQ to PurL. This Mycobacterium leprae (strain TN) protein is Phosphoribosylformylglycinamidine synthase subunit PurS.